The primary structure comprises 815 residues: Calpain-3 (815 aa).

The disordered stretch occupies residues 7–36 (ASVAPRTAAEPRSPGPVPHPAQSKATEAGG). In terms of domain architecture, Calpain catalytic spans 74-417 (LYVDPEFPPD…FTKLEICNLT (344 aa)). Active-site residues include cysteine 129, histidine 334, and asparagine 358. A domain III region spans residues 418 to 586 (ADALQSDKLQ…KRNLSEEVEN (169 aa)). The tract at residues 587-649 (TISVDRPVPI…QESEEQQQFR (63 aa)) is linker. The tract at residues 605-646 (SNKELGVDQESEEGKGKTSPDKQEQSPQPQPGSSDQESEEQQ) is disordered. Over residues 616-628 (EEGKGKTSPDKQE) the composition is skewed to basic and acidic residues. Over residues 629–639 (QSPQPQPGSSD) the composition is skewed to low complexity. EF-hand domains lie at 643 to 677 (EEQQ…VVNK), 686 to 719 (FTLE…NKIK), 716 to 751 (NKIK…AGFH), and 781 to 815 (VRLE…TMYA). The interval 650 to 815 (NIFKQIAGDD…LEWLQLTMYA (166 aa)) is domain IV. 18 residues coordinate Ca(2+): alanine 656, aspartate 659, glutamate 661, glutamate 666, aspartate 699, aspartate 701, serine 703, lysine 705, glutamate 710, aspartate 729, aspartate 731, serine 733, threonine 735, glutamate 740, aspartate 794, aspartate 796, aspartate 798, and isoleucine 800.

This sequence belongs to the peptidase C2 family. In terms of assembly, homodimer; via EF-hand domain 4. Interacts with TTN/titin. Interacts with CMYA5; this interaction, which results in CMYA5 proteolysis, may protect CAPN3 from autolysis. Interacts with SIMC1. Interacts with UTP25; the interaction is required for CAPN3 translocation to the nucleolus.

The protein resides in the cytoplasm. It is found in the nucleus. It localises to the nucleolus. The catalysed reaction is Broad endopeptidase activity.. Activated by micromolar concentrations of calcium and inhibited by calpastatin. Functionally, calcium-regulated non-lysosomal thiol-protease. Proteolytically cleaves CTBP1. Mediates, with UTP25, the proteasome-independent degradation of p53/TP53. The chain is Calpain-3 (CAPN3) from Macaca fascicularis (Crab-eating macaque).